Reading from the N-terminus, the 521-residue chain is Probable glycogen synthase (521 aa).

This sequence belongs to the glycosyltransferase 1 family. Bacterial/plant glycogen synthase subfamily.

It catalyses the reaction [(1-&gt;4)-alpha-D-glucosyl](n) + ADP-alpha-D-glucose = [(1-&gt;4)-alpha-D-glucosyl](n+1) + ADP + H(+). The protein operates within glycan biosynthesis; glycogen biosynthesis. Functionally, synthesizes alpha-1,4-glucan chains using ADP-glucose. The chain is Probable glycogen synthase (glgA) from Methanocaldococcus jannaschii (strain ATCC 43067 / DSM 2661 / JAL-1 / JCM 10045 / NBRC 100440) (Methanococcus jannaschii).